The following is a 473-amino-acid chain: UDP-N-acetylmuramate--L-alanine ligase (473 aa).

115–121 serves as a coordination point for ATP; the sequence is GTHGKTT.

Belongs to the MurCDEF family.

It localises to the cytoplasm. It carries out the reaction UDP-N-acetyl-alpha-D-muramate + L-alanine + ATP = UDP-N-acetyl-alpha-D-muramoyl-L-alanine + ADP + phosphate + H(+). The protein operates within cell wall biogenesis; peptidoglycan biosynthesis. Functionally, cell wall formation. The chain is UDP-N-acetylmuramate--L-alanine ligase from Rhizorhabdus wittichii (strain DSM 6014 / CCUG 31198 / JCM 15750 / NBRC 105917 / EY 4224 / RW1) (Sphingomonas wittichii).